The chain runs to 148 residues: Lipoprotein signal peptidase (148 aa).

The next 2 helical transmembrane spans lie at 57-77 (VLLVLVTLLIMIGVIYYFIKY) and 88-105 (VSFIVSGALGNLYDRIFY). Residues Asp-110 and Asp-129 contribute to the active site. A helical membrane pass occupies residues 124–144 (TFNIADILVVVGTIMLAIFLL).

This sequence belongs to the peptidase A8 family.

The protein localises to the cell membrane. The enzyme catalyses Release of signal peptides from bacterial membrane prolipoproteins. Hydrolyzes -Xaa-Yaa-Zaa-|-(S,diacylglyceryl)Cys-, in which Xaa is hydrophobic (preferably Leu), and Yaa (Ala or Ser) and Zaa (Gly or Ala) have small, neutral side chains.. It participates in protein modification; lipoprotein biosynthesis (signal peptide cleavage). This protein specifically catalyzes the removal of signal peptides from prolipoproteins. The protein is Lipoprotein signal peptidase of Clostridium novyi (strain NT).